The following is a 74-amino-acid chain: Large ribosomal subunit protein bL31 (74 aa).

It belongs to the bacterial ribosomal protein bL31 family. Type A subfamily. In terms of assembly, part of the 50S ribosomal subunit.

Binds the 23S rRNA. This Afipia carboxidovorans (strain ATCC 49405 / DSM 1227 / KCTC 32145 / OM5) (Oligotropha carboxidovorans) protein is Large ribosomal subunit protein bL31.